A 440-amino-acid polypeptide reads, in one-letter code: Gamma-aminobutyric acid receptor subunit pi (440 aa).

The signal sequence occupies residues M1–G23. The Extracellular portion of the chain corresponds to N24–N241. 3 N-linked (GlcNAc...) asparagine glycosylation sites follow: N43, N102, and N145. A disulfide bridge links C160 with C174. N-linked (GlcNAc...) asparagine glycosylation is found at N196 and N228. The helical transmembrane segment at V242–V262 threads the bilayer. Over S263–S270 the chain is Cytoplasmic. Residues V271–I290 traverse the membrane as a helical segment. Over G291 to C301 the chain is Extracellular. The chain crosses the membrane as a helical span at residues F302 to L322. At E323–K419 the chain is on the cytoplasmic side. Residues L420–F440 traverse the membrane as a helical segment.

This sequence belongs to the ligand-gated ion channel (TC 1.A.9) family. Gamma-aminobutyric acid receptor (TC 1.A.9.5) subfamily. GABRP sub-subfamily. In terms of assembly, heteropentamer, formed by a combination of alpha (GABRA1-6), beta (GABRB1-3), gamma (GABRG1-3), delta (GABRD), epsilon (GABRE), rho (GABRR1-3), pi (GABRP) and theta (GABRQ) chains, each subunit exhibiting distinct physiological and pharmacological properties.

The protein resides in the cell membrane. It is found in the apical cell membrane. It catalyses the reaction chloride(in) = chloride(out). Its function is as follows. Pi subunit of the heteropentameric ligand-gated chloride channel gated by gamma-aminobutyric acid (GABA). GABA-gated chloride channels, also named GABA(A) receptors (GABAAR), consist of five subunits arranged around a central pore and contain GABA active binding site(s) located at the alpha and beta subunit interfaces. When activated by GABA, GABAARs selectively allow the flow of chloride anions across the cell membrane down their electrochemical gradient. Pi-containing GABAARs are mostly located in peripheral tissues. In the uterus, pi subunits modulate uterus contraction by altering the sensitivity of GABAARs to pregnanolone. In the lungs, pi-containing GABAARs contribute to pulmonary fluid transport via luminal secretion of chloride. In Bos taurus (Bovine), this protein is Gamma-aminobutyric acid receptor subunit pi (GABRP).